The chain runs to 145 residues: Major pollen allergen Lig v 1 (145 aa).

Cystine bridges form between Cys-19/Cys-90, Cys-22/Cys-131, and Cys-43/Cys-78. An N-linked (GlcNAc...) asparagine glycan is attached at Asn-111.

This sequence belongs to the Ole e I family.

The protein localises to the secreted. This is Major pollen allergen Lig v 1 from Ligustrum vulgare (Common privet).